The primary structure comprises 174 residues: ATP-dependent protease subunit HslV (174 aa).

Threonine 2 is a catalytic residue. 3 residues coordinate Na(+): glycine 157, cysteine 160, and threonine 163.

It belongs to the peptidase T1B family. HslV subfamily. In terms of assembly, a double ring-shaped homohexamer of HslV is capped on each side by a ring-shaped HslU homohexamer. The assembly of the HslU/HslV complex is dependent on binding of ATP.

It localises to the cytoplasm. It carries out the reaction ATP-dependent cleavage of peptide bonds with broad specificity.. Its activity is regulated as follows. Allosterically activated by HslU binding. Protease subunit of a proteasome-like degradation complex believed to be a general protein degrading machinery. The chain is ATP-dependent protease subunit HslV from Yersinia pseudotuberculosis serotype I (strain IP32953).